The primary structure comprises 289 residues: Oxaloacetate decarboxylase (289 aa).

Substrate is bound at residue serine 50. Aspartate 88 is a Mg(2+) binding site. The substrate site is built by arginine 159 and histidine 235.

It belongs to the isocitrate lyase/PEP mutase superfamily. Oxaloacetate decarboxylase family. Homotetramer; dimer of dimers. Mg(2+) serves as cofactor.

The enzyme catalyses oxaloacetate + H(+) = pyruvate + CO2. Catalyzes the decarboxylation of oxaloacetate into pyruvate. Seems to play a role in maintaining cellular concentrations of bicarbonate and pyruvate. The polypeptide is Oxaloacetate decarboxylase (Pseudomonas entomophila (strain L48)).